Reading from the N-terminus, the 873-residue chain is Coatomer subunit gamma-2 (873 aa).

Basic and acidic residues predominate over residues 1 to 11; the sequence is MIKKFDKKDEE. A disordered region spans residues 1 to 21; that stretch reads MIKKFDKKDEESGSGSNPFQH. 6 HEAT repeats span residues 64 to 101, 283 to 320, 321 to 355, 356 to 392, 395 to 430, and 467 to 504; these read TEAT…ISED, RELA…KHPS, AVTA…GSES, SVDR…KYPR, SVMM…ENPE, and PTPS…QNDD.

This sequence belongs to the COPG family. In terms of assembly, oligomeric complex.

It is found in the cytoplasm. The protein localises to the golgi apparatus membrane. Its subcellular location is the cytoplasmic vesicle. The protein resides in the COPI-coated vesicle membrane. Functionally, the coatomer is a cytosolic protein complex that binds to dilysine motifs and reversibly associates with Golgi non-clathrin-coated vesicles, which further mediate biosynthetic protein transport from the ER, via the Golgi up to the trans Golgi network. Coatomer complex is required for budding from Golgi membranes, and is essential for the retrograde Golgi-to-ER transport of dilysine-tagged proteins. The sequence is that of Coatomer subunit gamma-2 (copg2) from Danio rerio (Zebrafish).